A 662-amino-acid polypeptide reads, in one-letter code: Zinc finger protein 800 (662 aa).

The C2H2-type 1; degenerate zinc finger occupies 69 to 91 (FECKLCRSLFRGLPNLITHKKFY). Residue Lys132 forms a Glycyl lysine isopeptide (Lys-Gly) (interchain with G-Cter in SUMO2) linkage. 2 disordered regions span residues 172 to 197 (ETSS…PPSI) and 205 to 224 (AAPT…TSDS). Residues 205 to 216 (AAPTEEQPQESQ) show a composition bias toward low complexity. The segment at 231-254 (LICCLCRKEFNSRRGVRRHIRKVH) adopts a C2H2-type 2 zinc-finger fold. Lys280 is covalently cross-linked (Glycyl lysine isopeptide (Lys-Gly) (interchain with G-Cter in SUMO2)). The C2H2-type 3 zinc-finger motif lies at 288–311 (RSCPVCCKSFATKANVRRHFDEVH). Ser318 carries the phosphoserine modification. The segment at 319 to 349 (ITPDIATKPGQPLFLDSASPKKSFKTRKQKS) is disordered. Residue Thr320 is modified to Phosphothreonine. Position 337 is a phosphoserine (Ser337). Positions 340-349 (KSFKTRKQKS) are enriched in basic residues. The C2H2-type 4 zinc finger occupies 357–382 (TACKCLLCKRKYSSQIMLKRHMQIVH). Positions 389–473 (ANSKREKGPN…AGGQQKTRKP (85 aa)) are disordered. Lys392 participates in a covalent cross-link: Glycyl lysine isopeptide (Lys-Gly) (interchain with G-Cter in SUMO2). The segment covering 414–434 (VESSPPSITHSPQNELKGTNH) has biased composition (polar residues). Phosphoserine occurs at positions 420, 424, 453, 455, 458, and 460. The span at 456–468 (PKSASPSAAGGQQ) shows a compositional bias: low complexity. Lys474 is covalently cross-linked (Glycyl lysine isopeptide (Lys-Gly) (interchain with G-Cter in SUMO2)). C2H2-type zinc fingers lie at residues 484 to 506 (LYCK…IELH) and 517 to 540 (YKCP…TVVH). Disordered regions lie at residues 573–597 (RGPS…PSKK) and 633–662 (HHKK…KALV). Basic and acidic residues predominate over residues 575–587 (PSREEAKHNDSKQ). Lys597 is covalently cross-linked (Glycyl lysine isopeptide (Lys-Gly) (interchain with G-Cter in SUMO2)). The segment at 616–638 (HRCNKCGKAFAKKTYLEHHKKTH) adopts a C2H2-type 7 zinc-finger fold. Positions 651–662 (TKGRSTRSKALV) are enriched in basic residues.

This sequence belongs to the krueppel C2H2-type zinc-finger protein family.

Its subcellular location is the nucleus. Its function is as follows. May be involved in transcriptional regulation. This chain is Zinc finger protein 800 (Znf800), found in Mus musculus (Mouse).